Consider the following 628-residue polypeptide: MERDGCFGNCWLRRWEKSDMNRKGFGGHRDAKQLSRTKNRFARLDPDTQSRYEDDDEPAVPVRASLTSASSRGRGGSSRGFGQSAASIANTGVRNADIVYKCRATGAAKKVDAKWLIKQLNQIIENFKPLLWTDNARGDFEWYVRDEDTASTIRANNRRVVHKESGTRVEFYTSKVPAPWMKLKREEIEIIHRVVDKRHNAENRVLDLSNFHEDEEFKAKDMMMNLTKGNVMLTVLDHIDDKYGNIVALSLSNNRIRHLDYASALVSIAKFVMELDLSHNHISTEKELEKFAGLPVERFFFEGNPVVESFTQRAAYISYIHQSFPRCNMLDGVEVQPLVVGPDLDIHDAMPFRAGYYPNPQIRVLVEQFVTSYFDFYDGPDGQRTRRNLHNAYDADASTFSLTIEHLRGSSHARHHNDECFAQYAGVSHNVLKQERFARHRASRSARGAMDIAVALSKLPTSSHMRDTFIVDVFLQSNDLLGFTVQGLFCDGDLTQTPSPSFFSRSFLVSPRENDSVAVISDQLFITVASLDRLEKFKKLYDQSIANGAAVEQVSAVQIAQIGVNGMGFDGAPALPIREEMIKAMCQFSGMIPPFSEKCLADCAWNFDFACQKFNEIKSSVPAEAFAH.

The tract at residues 47–83 is disordered; the sequence is DTQSRYEDDDEPAVPVRASLTSASSRGRGGSSRGFGQ. The span at 63 to 72 shows a compositional bias: low complexity; that stretch reads RASLTSASSR. An RRM domain is found at 100 to 179; sequence YKCRATGAAK…EFYTSKVPAP (80 aa). 2 LRR repeats span residues 245–270 and 271–294; these read NIVA…SIAK and FVME…FAGL. The NTF2 domain maps to 365 to 526; sequence LVEQFVTSYF…VAVISDQLFI (162 aa). The TAP-C domain maps to 576–628; that stretch reads PIREEMIKAMCQFSGMIPPFSEKCLADCAWNFDFACQKFNEIKSSVPAEAFAH.

This sequence belongs to the NXF family. Interacts with nucleoporins, Nup98, Nup153 and Nup214.

The protein resides in the nucleus. Functionally, involved in RNA export from the nucleus to the cytoplasm. The protein is Nuclear RNA export factor 1 (nxf-1) of Caenorhabditis elegans.